The sequence spans 422 residues: UDP-N-acetylglucosamine 1-carboxyvinyltransferase (422 aa).

A phosphoenolpyruvate-binding site is contributed by 22–23; that stretch reads KN. Arg-93 is a UDP-N-acetyl-alpha-D-glucosamine binding site. Catalysis depends on Cys-117, which acts as the Proton donor. Position 117 is a 2-(S-cysteinyl)pyruvic acid O-phosphothioketal (Cys-117). Residues 122–126, Asp-308, and Leu-330 each bind UDP-N-acetyl-alpha-D-glucosamine; that span reads RPVDL.

The protein belongs to the EPSP synthase family. MurA subfamily.

It localises to the cytoplasm. The catalysed reaction is phosphoenolpyruvate + UDP-N-acetyl-alpha-D-glucosamine = UDP-N-acetyl-3-O-(1-carboxyvinyl)-alpha-D-glucosamine + phosphate. It participates in cell wall biogenesis; peptidoglycan biosynthesis. Its function is as follows. Cell wall formation. Adds enolpyruvyl to UDP-N-acetylglucosamine. This chain is UDP-N-acetylglucosamine 1-carboxyvinyltransferase, found in Helicobacter pylori (strain ATCC 700392 / 26695) (Campylobacter pylori).